The chain runs to 161 residues: Protein-export protein SecB (161 aa).

It belongs to the SecB family. Homotetramer, a dimer of dimers. One homotetramer interacts with 1 SecA dimer.

It is found in the cytoplasm. One of the proteins required for the normal export of preproteins out of the cell cytoplasm. It is a molecular chaperone that binds to a subset of precursor proteins, maintaining them in a translocation-competent state. It also specifically binds to its receptor SecA. The sequence is that of Protein-export protein SecB from Pseudomonas fluorescens (strain Pf0-1).